Reading from the N-terminus, the 199-residue chain is DnaJ homolog subfamily C member 5B (199 aa).

A phosphoserine mark is found at Ser-14 and Ser-16. Residues Ser-19 to Gly-84 form the J domain.

As to quaternary structure, interacts with the chaperone complex consisting of HSC70 and SGTA. Palmitoylated.

The protein localises to the membrane. The protein is DnaJ homolog subfamily C member 5B (Dnajc5b) of Mus musculus (Mouse).